The following is a 295-amino-acid chain: Taste receptor type 2 member 120 (295 aa).

The Extracellular portion of the chain corresponds to 1 to 5; that stretch reads MNLVE. The chain crosses the membrane as a helical span at residues 6–26; the sequence is WIVTIIMMTEFLLGNCANVFI. The Cytoplasmic portion of the chain corresponds to 27–45; that stretch reads TIVNFIDCVKRRKISSADR. A helical transmembrane segment spans residues 46–66; that stretch reads IITAIAIFRIGLLWAMLTNWH. Topologically, residues 67-80 are extracellular; sequence SHVFTPDTDNLQMR. The helical transmembrane segment at 81–101 threads the bilayer; the sequence is VFGGITWAITNHFTTWLGTIL. The Cytoplasmic segment spans residues 102-127; sequence SMFYLFKIANFSNSLFLHLKRKLDNV. A helical transmembrane segment spans residues 128–148; it reads LLVIFLGSSLFLVAYLGMVNI. Topologically, residues 149 to 177 are extracellular; sequence KKIAWMSIHEGNVTTKSKLKHVTSITNML. Residue asparagine 160 is glycosylated (N-linked (GlcNAc...) asparagine). A helical transmembrane segment spans residues 178–198; it reads LFSLINIVPFGISLNCVLLLI. The Cytoplasmic segment spans residues 199–228; the sequence is YSLSKHLKNMKFYGKGCQDQSTMVHIKALQ. The helical transmembrane segment at 229-249 threads the bilayer; that stretch reads TVVSFLLLYATYSSCVIISGW. Topologically, residues 250 to 255 are extracellular; it reads SLQNAP. A helical transmembrane segment spans residues 256–276; it reads VFLFCVTIGSFYPAGHSCILI. The Cytoplasmic portion of the chain corresponds to 277-295; that stretch reads WGNQKLKQVFLLLLRQMRC.

It belongs to the G-protein coupled receptor T2R family.

Its subcellular location is the membrane. Its function is as follows. Putative taste receptor which may play a role in the perception of bitterness. The polypeptide is Taste receptor type 2 member 120 (Mus musculus (Mouse)).